Reading from the N-terminus, the 163-residue chain is Transcription elongation factor GreA (163 aa).

Residues 12–73 (YEKIQKEFEA…ELSDLLARAQ (62 aa)) are a coiled coil.

It belongs to the GreA/GreB family.

Functionally, necessary for efficient RNA polymerase transcription elongation past template-encoded arresting sites. The arresting sites in DNA have the property of trapping a certain fraction of elongating RNA polymerases that pass through, resulting in locked ternary complexes. Cleavage of the nascent transcript by cleavage factors such as GreA or GreB allows the resumption of elongation from the new 3'terminus. GreA releases sequences of 2 to 3 nucleotides. The chain is Transcription elongation factor GreA from Nitratiruptor sp. (strain SB155-2).